The chain runs to 311 residues: Porphobilinogen deaminase (311 aa).

An S-(dipyrrolylmethanemethyl)cysteine modification is found at Cys-242.

Belongs to the HMBS family. Monomer. The cofactor is dipyrromethane.

It catalyses the reaction 4 porphobilinogen + H2O = hydroxymethylbilane + 4 NH4(+). It participates in porphyrin-containing compound metabolism; protoporphyrin-IX biosynthesis; coproporphyrinogen-III from 5-aminolevulinate: step 2/4. Functionally, tetrapolymerization of the monopyrrole PBG into the hydroxymethylbilane pre-uroporphyrinogen in several discrete steps. The sequence is that of Porphobilinogen deaminase from Baumannia cicadellinicola subsp. Homalodisca coagulata.